We begin with the raw amino-acid sequence, 325 residues long: Small ribosomal subunit protein RACK1 (325 aa).

7 WD repeats span residues 5–48 (QMKL…WDVD), 58–99 (IGRP…WDLN), 100–141 (QGVS…WNTL), 143–186 (QCKY…WNLG), 187–227 (NCRL…LWDL), 228–268 (NEGK…WDLE), and 269–320 (DKKE…YQVS).

This sequence belongs to the WD repeat G protein beta family. Ribosomal protein RACK1 subfamily.

Its function is as follows. Required for the expression of antimicrobial peptide nlp-29 in response to fungal infection or physical injury. The chain is Small ribosomal subunit protein RACK1 (rack-1) from Caenorhabditis elegans.